Reading from the N-terminus, the 104-residue chain is Guanidinium exporter (104 aa).

Residues 1 to 3 (MSW) are Cytoplasmic-facing. Residues 4–26 (IILFVAGLLEIVWAVGLKYTHGF) form a helical membrane-spanning segment. Residues 27–32 (TRLTPS) lie on the Periplasmic side of the membrane. Residues 33–50 (IITISAMIVSMGMLSYAM) traverse the membrane as a helical segment. The Cytoplasmic portion of the chain corresponds to 51 to 54 (KGLP). The chain crosses the membrane as a helical span at residues 55-77 (AGTAYAIWTGIGAVGTAIFGIIV). The Periplasmic segment spans residues 78-83 (FGESAN). Residues 84-103 (IYRLLSLAMIVFGIIGLKLA) form a helical membrane-spanning segment. Position 104 (Ser-104) is a topological domain, cytoplasmic.

The protein belongs to the drug/metabolite transporter (DMT) superfamily. Small multidrug resistance (SMR) (TC 2.A.7.1) family. Gdx/SugE subfamily.

It is found in the cell inner membrane. Its function is as follows. Guanidinium ion exporter. Couples guanidinium export to the proton motive force, exchanging one guanidinium ion for two protons. The sequence is that of Guanidinium exporter from Proteus vulgaris.